The chain runs to 1591 residues: Mediator of RNA polymerase II transcription subunit 12 (1591 aa).

3 disordered regions span residues 1-116 (MIPH…LSWR), 132-176 (GAGE…AAGL), and 1488-1530 (NATL…SLGV). The span at 40 to 53 (EQSSMPAPQPQTGP) shows a compositional bias: polar residues. The segment covering 66–80 (AQEREHPAKRLRLDI) has biased composition (basic and acidic residues). Over residues 99 to 108 (PKSTPVSTSS) the composition is skewed to low complexity. The segment covering 151-162 (LSPPSFPAPPWK) has biased composition (pro residues). A compositionally biased stretch (low complexity) spans 1496-1512 (PSPAASGSTPAPTPSGS).

It belongs to the Mediator complex subunit 12 family. As to quaternary structure, component of the srb8-11 complex, which itself associates with the Mediator complex.

The protein localises to the nucleus. Component of the srb8-11 complex. The srb8-11 complex is a regulatory module of the Mediator complex which is itself involved in regulation of basal and activated RNA polymerase II-dependent transcription. The srb8-11 complex may be involved in the transcriptional repression of a subset of genes regulated by Mediator. It may inhibit the association of the Mediator complex with RNA polymerase II to form the holoenzyme complex. In Aspergillus clavatus (strain ATCC 1007 / CBS 513.65 / DSM 816 / NCTC 3887 / NRRL 1 / QM 1276 / 107), this protein is Mediator of RNA polymerase II transcription subunit 12 (srb8).